We begin with the raw amino-acid sequence, 305 residues long: Translation initiation factor eIF2B subunit alpha (305 aa).

This sequence belongs to the eIF-2B alpha/beta/delta subunits family. In terms of assembly, component of the translation initiation factor 2B (eIF2B) complex which is a heterodecamer of two sets of five different subunits: alpha, beta, gamma, delta and epsilon. Subunits alpha, beta and delta comprise a regulatory subcomplex and subunits epsilon and gamma comprise a catalytic subcomplex. Within the complex, the hexameric regulatory complex resides at the center, with the two heterodimeric catalytic subcomplexes bound on opposite sides.

It localises to the cytoplasm. The protein localises to the cytosol. Activated by the chemical integrated stress response (ISR) inhibitor ISRIB which stimulates guanine nucleotide exchange factor activity for both phosphorylated and unphosphorylated eIF2. In terms of biological role, acts as a component of the translation initiation factor 2B (eIF2B) complex, which catalyzes the exchange of GDP for GTP on eukaryotic initiation factor 2 (eIF2) gamma subunit. Its guanine nucleotide exchange factor activity is repressed when bound to eIF2 complex phosphorylated on the alpha subunit, thereby limiting the amount of methionyl-initiator methionine tRNA available to the ribosome and consequently global translation is repressed. This is Translation initiation factor eIF2B subunit alpha (EIF2B1) from Bos taurus (Bovine).